A 298-amino-acid chain; its full sequence is MLTTPTRFVALRIPFRSSNKIPISIAPSPKVFPRKPVIRVPASLRFVATMSTPAAAVNATVTVTDAGRGSITHVIFDMDGLLLDTEKFYTEVQEKILARYNKTFDWSLKAKMMGRKAIEAARLFVDESGISDSLSAEDFIVERESMLQDLFPTSDLMPGASRLLRHLHGKGIPICIATGTHTRHFDLKTQRHRELFSLMHHVVRGDDPEVKEGKPAPDGFLAASRRFEDGPVDPRKVLVFEDAPSGVQAAKNAGMNVIMVPDSRLDKSYCNVADQVLASLLDFKPEEWGLPSFQDSHN.

A mitochondrion-targeting transit peptide spans 1–46 (MLTTPTRFVALRIPFRSSNKIPISIAPSPKVFPRKPVIRVPASLRF). The active-site Nucleophile is the Asp77. Residues Asp77, Asp79, and Asp242 each coordinate Mg(2+). The Proton donor role is filled by Asp79.

This sequence belongs to the HAD-like hydrolase superfamily. DOG/GPP family. It depends on Mg(2+) as a cofactor. Ubiquitous with highest expression in siliques. Mainly restricted to the meristem of immature flower and vascular elements of the root, shoot, leave, siliqua and developing embryo (at the protein level).

It localises to the mitochondrion. It catalyses the reaction sn-glycerol 1-phosphate + H2O = glycerol + phosphate. The catalysed reaction is sn-glycerol 3-phosphate + H2O = glycerol + phosphate. The enzyme catalyses 5-amino-6-(5-phospho-D-ribitylamino)uracil + H2O = 5-amino-6-(D-ribitylamino)uracil + phosphate. Functionally, acts as a glycerol-3-phosphatase with higher stereospecificity for L-glycerol-3-phosphate than DL-glycerol-3-phosphate. Can also dephosphorylate in vitro 5-amino-6-(5-phospho-D-ribitylamino)uracil, also known as ARPP. This Arabidopsis thaliana (Mouse-ear cress) protein is (DL)-glycerol-3-phosphatase 1, mitochondrial.